The sequence spans 650 residues: Chaperone protein DnaK (650 aa).

Position 200 is a phosphothreonine; by autocatalysis (threonine 200). The segment covering 612–636 (QQAGAAGAAGAAEGAAHAGGAQQAA) has biased composition (low complexity). Residues 612-650 (QQAGAAGAAGAAEGAAHAGGAQQAADDVVDAEFKEVKKD) form a disordered region.

Belongs to the heat shock protein 70 family.

Its function is as follows. Acts as a chaperone. This chain is Chaperone protein DnaK, found in Burkholderia ambifaria (strain ATCC BAA-244 / DSM 16087 / CCUG 44356 / LMG 19182 / AMMD) (Burkholderia cepacia (strain AMMD)).